The following is a 313-amino-acid chain: Olfactory receptor 10K1 (313 aa).

At 1–25 (MEQVNKTVVREFVVLGFSSLARLQQ) the chain is on the extracellular side. N-linked (GlcNAc...) asparagine glycosylation occurs at Asn-5. The helical transmembrane segment at 26–46 (LLFVIFLLLYLFTLGTNAIII) threads the bilayer. Over 47 to 54 (STIVLDRA) the chain is Cytoplasmic. The helical transmembrane segment at 55–75 (LHTPMYFFLAILSCSEICYTF) threads the bilayer. At 76–99 (VIVPKMLVDLLSQKKTISFLGCAI) the chain is on the extracellular side. The helical transmembrane segment at 100–120 (QMFSFLFFGSSHSFLLAAMGY) threads the bilayer. At 121 to 139 (DRYMAICNPLRYSVLMGHG) the chain is on the cytoplasmic side. The helical transmembrane segment at 140 to 160 (VCMGLMAAACACGFTVSLVTT) threads the bilayer. Residues 161–197 (SLVFHLPFHSSNQLHHFFCDISPVLKLASQHSGFSQL) lie on the Extracellular side of the membrane. Residues 198–217 (VIFMLGVFALVIPLLLILVS) traverse the membrane as a helical segment. Residues 218 to 237 (YIRIISAILKIPSSVGRYKT) are Cytoplasmic-facing. Residues 238–258 (FSTCASHLIVVTVHYSCASFI) form a helical membrane-spanning segment. The Extracellular portion of the chain corresponds to 259–271 (YLRPKTNYTSSQD). Residue Asn-265 is glycosylated (N-linked (GlcNAc...) asparagine). A helical membrane pass occupies residues 272-292 (TLISVSYTILTPLFNPMIYSL). Over 293 to 313 (RNKEFKSALRRTIGQTFYPLS) the chain is Cytoplasmic.

It belongs to the G-protein coupled receptor 1 family.

The protein resides in the cell membrane. Its function is as follows. Odorant receptor. The sequence is that of Olfactory receptor 10K1 (OR10K1) from Homo sapiens (Human).